The chain runs to 797 residues: Protocadherin beta-11 (797 aa).

The N-terminal stretch at 1–26 is a signal peptide; that stretch reads MENGGTRTQQIRQVLLLFVLLGMSQA. The Extracellular segment spans residues 27–690; it reads GSETWSFSVA…AQTDFLTVYL (664 aa). Cadherin domains lie at 35–133, 138–242, 247–347, 352–451, and 456–561; these read VAEE…SPIF, MLLE…SPEF, YEVK…APEI, ITSP…APTF, and YTLF…SPFV. Residues N418, N436, N487, and N567 are each glycosylated (N-linked (GlcNAc...) asparagine). The 104-residue stretch at 568 to 671 folds into the Cadherin 6 domain; sequence GSAPCTELVP…LVDGFSQPFL (104 aa). Residues 691 to 711 form a helical membrane-spanning segment; it reads VVALASVSSLFFFSVLLFVAV. The Cytoplasmic portion of the chain corresponds to 712-797; that stretch reads RLCRRSRAAS…TFQNSFGFNF (86 aa).

The protein resides in the cell membrane. Potential calcium-dependent cell-adhesion protein. May be involved in the establishment and maintenance of specific neuronal connections in the brain. The protein is Protocadherin beta-11 (PCDHB11) of Pan troglodytes (Chimpanzee).